A 341-amino-acid chain; its full sequence is S-adenosylmethionine:tRNA ribosyltransferase-isomerase (341 aa).

Belongs to the QueA family. Monomer.

The protein resides in the cytoplasm. It catalyses the reaction 7-aminomethyl-7-carbaguanosine(34) in tRNA + S-adenosyl-L-methionine = epoxyqueuosine(34) in tRNA + adenine + L-methionine + 2 H(+). The protein operates within tRNA modification; tRNA-queuosine biosynthesis. Transfers and isomerizes the ribose moiety from AdoMet to the 7-aminomethyl group of 7-deazaguanine (preQ1-tRNA) to give epoxyqueuosine (oQ-tRNA). This is S-adenosylmethionine:tRNA ribosyltransferase-isomerase from Staphylococcus saprophyticus subsp. saprophyticus (strain ATCC 15305 / DSM 20229 / NCIMB 8711 / NCTC 7292 / S-41).